The primary structure comprises 1032 residues: MGDIMRPIPFEELLTRIFDEYQQQRSIFGIPEQQFYSPVKGKTVSVFGETCATPVGPAAGPHTQLAQNIVTSWLTGGRFIELKTVQILDRLELEKPCIDAEDECFNTEWSTEFTLLKAWDEYLKAWFALHLLEAMFQPSDSGKSFIFNMSVGYNLEGIKQPPMQQFIDNMMDASDHPKFAQYRDTLNKLLQDDAFLARHGLQEKRESLQALPARIPTSMVHGVTLSTMHGCPPHEIEAICRYMLEEKGLNTFVKLNPTLLGYARVREILDVCGFGYIGLKEESFDHDLKLTQALEMLERLMALAKEKSLGFGVKLTNTLGTINNKGALPGEEMYMSGRALFPLSINVAAVLSRAFDGKLPISYSGGASQLTIRDIFDTGIRPITMATDLLKPGGYLRLSACMRELEGSDAWGLDHVDVERLNRLAADALTMEYTQKHWKPEERIEVAEDLPLTDCYVAPCVTACAIKQDIPEYIRLLGEHRYADALELIYQRNALPAITGHICDHQCQYNCTRLDYDSALNIRELKKVALEKGWDEYKQRWHKPAGSGSRHPVAVIGAGPAGLAAGYFLARAGHPVTLFEREANAGGVVKNIIPQFRIPAELIQHDIDFVAAHGVKFEYGCSPDLTVEQLKNQDFHYVLIATGTDKNSGVKLAGDNQNVLKSLPFLREYNKGTALKLGKHVVVVGAGNTAMDCARAALRVPGVEKATVVYRRSLQEMPAWREEYEEALHDGVEFRFLNNPERFDADGTLTLRVMSLGEPDEKGRRRPVETNETVTLHVDSLITAIGEQQDTEALNAMGVPLDKNGWPDVDHNGETRLTDVFMIGDVQRGPSSIVAAVGTARRATDAILSRENIRSHQNDKYWNNVNPAEIYQRKGDISITLVNSDDRDAFVAQEAARCLECNYVCSKCVDVCPNRANVSIAVPGFQNRFQTLHLDAYCNECGNCAQFCPWNGKPYKDKITVFSLAQDFDNSSNPGFLVEDCRVRVRLNNQSWVLNIDSEGQFNNVPPELNDMCRIISHVHQHHHYLLGRVEV.

The region spanning 928–958 (RFQTLHLDAYCNECGNCAQFCPWNGKPYKDK) is the 4Fe-4S ferredoxin-type domain. [4Fe-4S] cluster is bound by residues cysteine 938, cysteine 941, cysteine 944, and cysteine 948.

[4Fe-4S] cluster is required as a cofactor.

Functionally, could be an iron-sulfur flavoprotein with NADPH:O(2) oxidoreductase activity. This chain is Putative oxidoreductase YgfK (ygfK), found in Escherichia coli O157:H7.